A 344-amino-acid chain; its full sequence is Arginine N-succinyltransferase (344 aa).

Leucine 125 lines the succinyl-CoA pocket. Histidine 229 functions as the Proton donor in the catalytic mechanism.

Belongs to the arginine N-succinyltransferase family.

The enzyme catalyses succinyl-CoA + L-arginine = N(2)-succinyl-L-arginine + CoA + H(+). It participates in amino-acid degradation; L-arginine degradation via AST pathway; L-glutamate and succinate from L-arginine: step 1/5. Catalyzes the transfer of succinyl-CoA to arginine to produce N(2)-succinylarginine. This chain is Arginine N-succinyltransferase, found in Shigella boydii serotype 18 (strain CDC 3083-94 / BS512).